A 276-amino-acid polypeptide reads, in one-letter code: MGIKKYNPTTNGRRNMTTNDFAEITTDRPEKSLLAPLSKKAGRNNQGKITVRHQGGGHKRQYRIIDFKRNKDGIPGRVATIEYDPNRSANIALINYVDGEKRYILAPKTLEVGMEVMSGPESDIKIGNALPLINIPVGTVVHNIELKPGRGGQLVRSAGTSAQVLGKEGKYVLVRLTSGEVRLVLSACRASIGQVGNEQHELIKIGKAGRSRWLGKRPTVRGSVMNPVDHPHGGGEGRSPIGRKSPMSPWGKPTLGFKTRKKNKASDKFIVRRRKK.

Disordered regions lie at residues 1-20 (MGIK…TTND) and 219-276 (TVRG…RRKK). The span at 7 to 20 (NPTTNGRRNMTTND) shows a compositional bias: polar residues.

This sequence belongs to the universal ribosomal protein uL2 family. As to quaternary structure, part of the 50S ribosomal subunit. Forms a bridge to the 30S subunit in the 70S ribosome.

Functionally, one of the primary rRNA binding proteins. Required for association of the 30S and 50S subunits to form the 70S ribosome, for tRNA binding and peptide bond formation. It has been suggested to have peptidyltransferase activity; this is somewhat controversial. Makes several contacts with the 16S rRNA in the 70S ribosome. The polypeptide is Large ribosomal subunit protein uL2 (Bacillus mycoides (strain KBAB4) (Bacillus weihenstephanensis)).